A 246-amino-acid chain; its full sequence is Pyridoxine 5'-phosphate synthase (246 aa).

Asn12 contributes to the 3-amino-2-oxopropyl phosphate binding site. 14–15 (DH) lines the 1-deoxy-D-xylulose 5-phosphate pocket. Arg23 lines the 3-amino-2-oxopropyl phosphate pocket. His48 (proton acceptor) is an active-site residue. 1-deoxy-D-xylulose 5-phosphate contacts are provided by Arg50 and His55. The active-site Proton acceptor is the Glu75. Residue Thr105 participates in 1-deoxy-D-xylulose 5-phosphate binding. The active-site Proton donor is the His196. 3-amino-2-oxopropyl phosphate is bound by residues Gly197 and 218 to 219 (GH).

Belongs to the PNP synthase family. Homooctamer; tetramer of dimers.

Its subcellular location is the cytoplasm. The catalysed reaction is 3-amino-2-oxopropyl phosphate + 1-deoxy-D-xylulose 5-phosphate = pyridoxine 5'-phosphate + phosphate + 2 H2O + H(+). Its pathway is cofactor biosynthesis; pyridoxine 5'-phosphate biosynthesis; pyridoxine 5'-phosphate from D-erythrose 4-phosphate: step 5/5. Catalyzes the complicated ring closure reaction between the two acyclic compounds 1-deoxy-D-xylulose-5-phosphate (DXP) and 3-amino-2-oxopropyl phosphate (1-amino-acetone-3-phosphate or AAP) to form pyridoxine 5'-phosphate (PNP) and inorganic phosphate. The polypeptide is Pyridoxine 5'-phosphate synthase (Pseudomonas putida (strain ATCC 47054 / DSM 6125 / CFBP 8728 / NCIMB 11950 / KT2440)).